The sequence spans 185 residues: Ribosome-recycling factor (185 aa).

The protein belongs to the RRF family.

The protein localises to the cytoplasm. Responsible for the release of ribosomes from messenger RNA at the termination of protein biosynthesis. May increase the efficiency of translation by recycling ribosomes from one round of translation to another. This is Ribosome-recycling factor from Nitrosomonas europaea (strain ATCC 19718 / CIP 103999 / KCTC 2705 / NBRC 14298).